The primary structure comprises 136 residues: Large ribosomal subunit protein bL12 (136 aa).

It belongs to the bacterial ribosomal protein bL12 family. As to quaternary structure, homodimer. Part of the ribosomal stalk of the 50S ribosomal subunit. Forms a multimeric L10(L12)X complex, where L10 forms an elongated spine to which 2 to 4 L12 dimers bind in a sequential fashion. Binds GTP-bound translation factors.

Its function is as follows. Forms part of the ribosomal stalk which helps the ribosome interact with GTP-bound translation factors. Is thus essential for accurate translation. The polypeptide is Large ribosomal subunit protein bL12 (Synechococcus sp. (strain JA-2-3B'a(2-13)) (Cyanobacteria bacterium Yellowstone B-Prime)).